The chain runs to 313 residues: Ribosomal RNA small subunit methyltransferase H (313 aa).

S-adenosyl-L-methionine contacts are provided by residues 35–37 (GGH), aspartate 55, phenylalanine 80, aspartate 102, and glutamine 109.

This sequence belongs to the methyltransferase superfamily. RsmH family.

The protein resides in the cytoplasm. The catalysed reaction is cytidine(1402) in 16S rRNA + S-adenosyl-L-methionine = N(4)-methylcytidine(1402) in 16S rRNA + S-adenosyl-L-homocysteine + H(+). In terms of biological role, specifically methylates the N4 position of cytidine in position 1402 (C1402) of 16S rRNA. The chain is Ribosomal RNA small subunit methyltransferase H from Shewanella oneidensis (strain ATCC 700550 / JCM 31522 / CIP 106686 / LMG 19005 / NCIMB 14063 / MR-1).